The primary structure comprises 644 residues: Exoribonuclease 2 (644 aa).

One can recognise an RNB domain in the interval 189–516 (RRDLTALDFV…NHRLLKAIIK (328 aa)). The region spanning 561–643 (DTRFAAEILD…ETRSIIARPA (83 aa)) is the S1 motif domain.

This sequence belongs to the RNR ribonuclease family. RNase II subfamily.

It is found in the cytoplasm. It carries out the reaction Exonucleolytic cleavage in the 3'- to 5'-direction to yield nucleoside 5'-phosphates.. Involved in mRNA degradation. Hydrolyzes single-stranded polyribonucleotides processively in the 3' to 5' direction. The sequence is that of Exoribonuclease 2 from Klebsiella pneumoniae (strain 342).